The following is a 166-amino-acid chain: Regulatory protein RecX (166 aa).

Belongs to the RecX family.

Its subcellular location is the cytoplasm. Functionally, modulates RecA activity. The polypeptide is Regulatory protein RecX (Shigella dysenteriae serotype 1 (strain Sd197)).